Reading from the N-terminus, the 687-residue chain is Translation initiation factor IF-2 (687 aa).

The tr-type G domain occupies 186–355 (KRPPIVTVMG…LLTAEMLELK (170 aa)). Residues 195 to 202 (GHVDHGKT) are G1. GTP is bound at residue 195-202 (GHVDHGKT). The tract at residues 220–224 (GITQH) is G2. The tract at residues 241–244 (DTPG) is G3. GTP-binding positions include 241-245 (DTPGH) and 295-298 (NKID). The interval 295–298 (NKID) is G4. The tract at residues 331–333 (SAK) is G5.

Belongs to the TRAFAC class translation factor GTPase superfamily. Classic translation factor GTPase family. IF-2 subfamily.

It localises to the cytoplasm. Functionally, one of the essential components for the initiation of protein synthesis. Protects formylmethionyl-tRNA from spontaneous hydrolysis and promotes its binding to the 30S ribosomal subunits. Also involved in the hydrolysis of GTP during the formation of the 70S ribosomal complex. In Clostridium botulinum (strain Eklund 17B / Type B), this protein is Translation initiation factor IF-2.